The sequence spans 764 residues: MEAMMNFTSQYTVEEALAIEKEFSRLKEKCYLDHAGTTLYADSQIRSVCEGLAQNLYCNPHTSRTTEDLLDQVRYRVLRHFNTRSSEYSLIFTSGTTASLKLLAESYEFAPEGAFVYLKDSHTSVLGMREIVGTERIYPVEREQLLKELDSSERSDSEHSSLIVFPAQCNFNGVKYPLELVRKIQRNGISGYGKERFRVCLDAASFVSTSFLDLSKYQPDFVCLSFYKIFGYPTGLGALLVHHTAADQLRKKYYGGGTVKIAMAGRNFHVKRDPLVERFEDGTLAFTSIIALLQGFETLERLVPSTAGLRTIERISQQTFHLGRYCYNRLKALRHSNGNAVVKLYHDTGFEDQGLQGGIVNFNILHEDGTYVGFAEVSYMASLHNILLRTGCFCNPGACQRHLQLSDEDVLKQFDAGHVCGDANDLIDGQPTGSVRVSFGYMTRKEDIDCLLEMVEKCYIRKTIANGFTRTQIVSKYKSYDQPRLKMICLFPIKSCGAFKVTTRWPLSRRGLKHDREFVIVDENGVALTQKKLTEMCLIRPQINLKTNEMTLSHPSMDDFVLDLDLLGESQRIKLCQTKVCQDNVQAIDCGDQVAEWISVALQTSGLRLLKQSDEEVRTFQQSKQEIALANQAQFLLINQASVRWLADKVPDWDELHEEPTLESLVDRFRGNLIVETPTSMEECDWKRVTIGYLEFAVDGPCSRCQMICIDQGTGVKTTEPLRTIGREFKGKMRFGIYLSHVNPLRDGSEQWLYCNSVVEGLSE.

Lys-228 is subject to N6-(pyridoxal phosphate)lysine. The active site involves Cys-394. Positions 607–762 constitute an MOSC domain; sequence LRLLKQSDEE…LYCNSVVEGL (156 aa).

It belongs to the class-V pyridoxal-phosphate-dependent aminotransferase family. MOCOS subfamily. Pyridoxal 5'-phosphate serves as cofactor.

It carries out the reaction Mo-molybdopterin + L-cysteine + AH2 = thio-Mo-molybdopterin + L-alanine + A + H2O. Its function is as follows. Sulfurates the molybdenum cofactor. Sulfation of molybdenum is essential for xanthine dehydrogenase (XDH) and aldehyde oxidase (ADO) enzymes in which molybdenum cofactor is liganded by 1 oxygen and 1 sulfur atom in active form. This Aedes aegypti (Yellowfever mosquito) protein is Molybdenum cofactor sulfurase 3.